Here is a 489-residue protein sequence, read N- to C-terminus: MFDFDGLSNAFSCQTVLCVGDLMLDEFVYGEISRISPEAPAPVIAVQRSEINVGGAGNVARNIAALGARCIFVGLAGEDEAGVRLRTTLSREGLIEPLLISDPARPTTRKVRFVSDHFSTHMLRADWETPAPASGVVEQALIDAILPQLPRADIVLLSDYAKGVLTARVIRDVIDAARGLGKRVIVDPKSANFGIYSGATLLTPNRKEFADATRSRADDQASIAAAAREVMRLVDGEALLVTQSEHGMTLVPREGEVIHVPAHTVKVRDVTGAGDTVVATLAVSLAAGADWETALRTASAAAAVAVGKSGTAVVTLAELRRKILPPAFLAAEEKIAQSTDDLDQRLSAWREQGLRIGFTNGCFDILHPGHVKVLTGARAACDRLVVGLNSDASVTRLKGEGRPIQDERARAEVLAALEAVDLVVIFEEDTPMNLIERIQPNVLVKGGDYSLEQVVGQELVTARGGEVVLIDILRGFSTTSLVKRAGGRA.

Residues 1–330 (MFDFDGLSNA…RKILPPAFLA (330 aa)) form a ribokinase region. An ATP-binding site is contributed by 205–208 (NRKE). Aspartate 275 is an active-site residue. The segment at 358-489 (FTNGCFDILH…SLVKRAGGRA (132 aa)) is cytidylyltransferase.

This sequence in the N-terminal section; belongs to the carbohydrate kinase PfkB family. It in the C-terminal section; belongs to the cytidylyltransferase family. Homodimer.

It catalyses the reaction D-glycero-beta-D-manno-heptose 7-phosphate + ATP = D-glycero-beta-D-manno-heptose 1,7-bisphosphate + ADP + H(+). It carries out the reaction D-glycero-beta-D-manno-heptose 1-phosphate + ATP + H(+) = ADP-D-glycero-beta-D-manno-heptose + diphosphate. The protein operates within nucleotide-sugar biosynthesis; ADP-L-glycero-beta-D-manno-heptose biosynthesis; ADP-L-glycero-beta-D-manno-heptose from D-glycero-beta-D-manno-heptose 7-phosphate: step 1/4. It participates in nucleotide-sugar biosynthesis; ADP-L-glycero-beta-D-manno-heptose biosynthesis; ADP-L-glycero-beta-D-manno-heptose from D-glycero-beta-D-manno-heptose 7-phosphate: step 3/4. Functionally, catalyzes the phosphorylation of D-glycero-D-manno-heptose 7-phosphate at the C-1 position to selectively form D-glycero-beta-D-manno-heptose-1,7-bisphosphate. In terms of biological role, catalyzes the ADP transfer from ATP to D-glycero-beta-D-manno-heptose 1-phosphate, yielding ADP-D-glycero-beta-D-manno-heptose. This chain is Bifunctional protein HldE, found in Nitrobacter hamburgensis (strain DSM 10229 / NCIMB 13809 / X14).